A 123-amino-acid polypeptide reads, in one-letter code: Putative iron-sulfur cluster insertion protein ErpA (123 aa).

Residues C51, C115, and C117 each contribute to the iron-sulfur cluster site.

This sequence belongs to the HesB/IscA family. Homodimer. The cofactor is iron-sulfur cluster.

In terms of biological role, required for insertion of 4Fe-4S clusters. The chain is Putative iron-sulfur cluster insertion protein ErpA from Burkholderia lata (strain ATCC 17760 / DSM 23089 / LMG 22485 / NCIMB 9086 / R18194 / 383).